We begin with the raw amino-acid sequence, 373 residues long: Peptidoglycan recognition protein 4 (373 aa).

Residues 1-17 (MLPWLLVFSALGIQAWG) form the signal peptide. Residues asparagine 22, asparagine 39, asparagine 109, asparagine 145, and asparagine 247 are each glycosylated (N-linked (GlcNAc...) asparagine). N-acetylmuramoyl-L-alanine amidase domains follow at residues 74–212 (TPVN…ACPG) and 235–358 (YGII…LSPG). 3 disulfide bridges follow: cysteine 210-cysteine 332, cysteine 226-cysteine 270, and cysteine 246-cysteine 252. Peptidoglycan contacts are provided by tyrosine 263 and tyrosine 274. Interaction with murein regions lie at residues 293–302 (QGSSTPGYDD) and 353–354 (RT).

Belongs to the N-acetylmuramoyl-L-alanine amidase 2 family. Homodimer; disulfide-linked. Heterodimer with PGLYRP3; disulfide-linked. Post-translationally, N-glycosylated. In terms of tissue distribution, detected in skin epidermis, eccrine sweat glands and ducts, mucous cells in the submandibular salivary gland, mucous cells in the throat, ciliary body epithelial cells of the eye, small intestine, colon, stomach and in mature epithelial cells of the tongue (at protein level). High expression in skin and esophagus. Expressed also to a much lesser extent in the tonsils and thymus.

The protein localises to the secreted. In terms of biological role, pattern receptor that binds to murein peptidoglycans (PGN) of Gram-positive bacteria. Has bactericidal activity towards Gram-positive bacteria. May kill Gram-positive bacteria by interfering with peptidoglycan biosynthesis. Also binds to Gram-negative bacteria, and has bacteriostatic activity towards Gram-negative bacteria. Plays a role in innate immunity. The sequence is that of Peptidoglycan recognition protein 4 (PGLYRP4) from Homo sapiens (Human).